The following is a 418-amino-acid chain: Gamma-glutamyl phosphate reductase (418 aa).

It belongs to the gamma-glutamyl phosphate reductase family.

Its subcellular location is the cytoplasm. The catalysed reaction is L-glutamate 5-semialdehyde + phosphate + NADP(+) = L-glutamyl 5-phosphate + NADPH + H(+). The protein operates within amino-acid biosynthesis; L-proline biosynthesis; L-glutamate 5-semialdehyde from L-glutamate: step 2/2. In terms of biological role, catalyzes the NADPH-dependent reduction of L-glutamate 5-phosphate into L-glutamate 5-semialdehyde and phosphate. The product spontaneously undergoes cyclization to form 1-pyrroline-5-carboxylate. This Geobacter sp. (strain M21) protein is Gamma-glutamyl phosphate reductase.